Consider the following 112-residue polypeptide: uncharacterized protein (112 aa).

N-linked (GlcNAc...) asparagine; by host glycans are attached at residues Asn-29 and Asn-60. Residues Ile-66–Leu-86 form a helical membrane-spanning segment.

Belongs to the asfivirus B117L family.

The protein localises to the host membrane. It is found in the virion. This is an uncharacterized protein from African swine fever virus (isolate Tick/South Africa/Pretoriuskop Pr4/1996) (ASFV).